Here is a 2144-residue protein sequence, read N- to C-terminus: Polyketide synthase-like protein Preu9 (2144 aa).

The Ketosynthase family 3 (KS3) domain maps to 1-250 (MYALHLAVNA…GANAHCIIDH (250 aa)). Residues 276 to 325 (QNGHLNEFAANGTTNAPSRDHRNGITDGRADGNTNGHPNANGDVGGNPIN) form a disordered region. Residues 293-305 (SRDHRNGITDGRA) are compositionally biased toward basic and acidic residues. The malonyl-CoA:ACP transacylase (MAT) stretch occupies residues 435–738 (FVFTGQGAQW…KSPVEQILKS (304 aa)). The N-terminal hotdog fold stretch occupies residues 827 to 965 (HDLLGSKVVG…GCVKLIIKSS (139 aa)). The interval 827 to 1137 (HDLLGSKVVG…ERLRCVSYSR (311 aa)) is dehydratase (DH) domain. The PKS/mFAS DH domain maps to 827-1141 (HDLLGSKVVG…CVSYSRISSD (315 aa)). The active-site Proton acceptor; for dehydratase activity is His-859. Residues 979–1141 (TLRPVDVRAW…CVSYSRISSD (163 aa)) form a C-terminal hotdog fold region. The Proton donor; for dehydratase activity role is filled by Asp-1050. The interval 1305 to 1494 (TGIYPQLHRI…GLDVVLDDFP (190 aa)) is methyltransferase (MT) domain. The segment at 1731-2042 (GVPNSLCFAS…LANMIGKLVV (312 aa)) is enoyl reductase (ER) domain.

Functionally, polyketide synthase-like protein that lacks important domains such as carrier domain and does probably not function as a polyketide synthase. This chain is Polyketide synthase-like protein Preu9, found in Preussia isomera (Coprophilous fungus).